A 180-amino-acid chain; its full sequence is MSGLTIFSDQQPEKPLWQSHDAEEIQQQLTAIGVRFERWQADCELGENPQPEAVIAAYQHEIDRLVAENGYKSWDVISMRPDNPQREALREKFLSEHTHGEDEVRFFVEGSGLFCLHLNEKVYQILCEKNDLLSVPADIPHWFDMGSAPNFTAIRVFDNPEGWIARSTGDNIADGYPRLA.

Residues His97, His99, Glu103, and His141 each contribute to the Fe(2+) site. Residues His97, His99, Glu103, and His141 each coordinate Ni(2+).

It belongs to the acireductone dioxygenase (ARD) family. Monomer. The cofactor is Fe(2+). Ni(2+) is required as a cofactor.

It carries out the reaction 1,2-dihydroxy-5-(methylsulfanyl)pent-1-en-3-one + O2 = 3-(methylsulfanyl)propanoate + CO + formate + 2 H(+). The enzyme catalyses 1,2-dihydroxy-5-(methylsulfanyl)pent-1-en-3-one + O2 = 4-methylsulfanyl-2-oxobutanoate + formate + 2 H(+). It participates in amino-acid biosynthesis; L-methionine biosynthesis via salvage pathway; L-methionine from S-methyl-5-thio-alpha-D-ribose 1-phosphate: step 5/6. Catalyzes 2 different reactions between oxygen and the acireductone 1,2-dihydroxy-3-keto-5-methylthiopentene (DHK-MTPene) depending upon the metal bound in the active site. Fe-containing acireductone dioxygenase (Fe-ARD) produces formate and 2-keto-4-methylthiobutyrate (KMTB), the alpha-ketoacid precursor of methionine in the methionine recycle pathway. Ni-containing acireductone dioxygenase (Ni-ARD) produces methylthiopropionate, carbon monoxide and formate, and does not lie on the methionine recycle pathway. The chain is Acireductone dioxygenase from Yersinia pseudotuberculosis serotype O:3 (strain YPIII).